The primary structure comprises 161 residues: Large ribosomal subunit protein uL29c (161 aa).

The transit peptide at 1–61 (MATMSLAAAS…ERRAAAMVAM (61 aa)) directs the protein to the chloroplast.

This sequence belongs to the universal ribosomal protein uL29 family. In terms of assembly, part of the 50S ribosomal subunit.

It is found in the plastid. The protein localises to the chloroplast. This chain is Large ribosomal subunit protein uL29c (RPL29), found in Zea mays (Maize).